The chain runs to 630 residues: Molybdenum cofactor biosynthesis protein 1 (630 aa).

The 238-residue stretch at 61-298 (RFNRHHTYLR…SKTYHVPGFK (238 aa)) folds into the Radical SAM core domain. Residue arginine 70 coordinates GTP. [4Fe-4S] cluster is bound by residues cysteine 77 and cysteine 81. Tyrosine 83 lines the S-adenosyl-L-methionine pocket. Cysteine 84 lines the [4Fe-4S] cluster pocket. Arginine 120 lines the GTP pocket. Position 124 (glycine 124) interacts with S-adenosyl-L-methionine. GTP is bound at residue threonine 151. Serine 175 contributes to the S-adenosyl-L-methionine binding site. Lysine 212 serves as a coordination point for GTP. S-adenosyl-L-methionine is bound at residue methionine 246. [4Fe-4S] cluster-binding residues include cysteine 312 and cysteine 315. 317–319 (RLR) contacts GTP. Residue cysteine 329 coordinates [4Fe-4S] cluster. Positions 402 to 629 (KEVKNYLLKL…GGKSSSPQIT (228 aa)) are molybdenum cofactor biosynthesis protein C. The active-site For molybdenum cofactor biosynthesis protein C activity is aspartate 599.

This sequence in the C-terminal section; belongs to the MoaC family. In the N-terminal section; belongs to the radical SAM superfamily. MoaA family. As to quaternary structure, isoform mocs1a and isoform mocs1b probably form a heterooligomer. The cofactor is [4Fe-4S] cluster.

It catalyses the reaction GTP + AH2 + S-adenosyl-L-methionine = (8S)-3',8-cyclo-7,8-dihydroguanosine 5'-triphosphate + 5'-deoxyadenosine + L-methionine + A + H(+). The catalysed reaction is (8S)-3',8-cyclo-7,8-dihydroguanosine 5'-triphosphate = cyclic pyranopterin phosphate + diphosphate. The protein operates within cofactor biosynthesis; molybdopterin biosynthesis. In terms of biological role, isoform mocs1a and isoform mocs1b probably form a complex that catalyzes the conversion of 5'-GTP to cyclic pyranopterin monophosphate (cPMP). mocs1a catalyzes the cyclization of GTP to (8S)-3',8-cyclo-7,8-dihydroguanosine 5'-triphosphate and mocs1b catalyzes the subsequent conversion of (8S)-3',8-cyclo-7,8-dihydroguanosine 5'-triphosphate to cPMP. The chain is Molybdenum cofactor biosynthesis protein 1 (mocs1) from Dictyostelium discoideum (Social amoeba).